Reading from the N-terminus, the 346-residue chain is MAMVSEFLKQARFLENQEQEYVQAVKSYKGGPGSAVSPYPSFNVSSDVAALHKAIMVKGVDEATIIDILTKRTNAQRQQIKAAYLQENGKPLDEVLRKALTGHLEEVVLAMLKTPAQFDADELRGAMKGLGTDEDTLIEILTTRSNEQIREINRVYREELKRDLAKDITSDTSGDFRKALLALAKGDRCQDLSVNQDLADTDARALYEAGERRKGTDVNVFTTILTSRSFPHLRRVFQNYGKYSQHDMNKALDLELKGDIEKCLTTIVKCATSTPAFFAEKLYEAMKGAGTRHKALIRIMVSRSEIDMNEIKVFYQKKYGISLCQAILDETKGDYEKILVALCGGN.

Alanine 2 is modified (N-acetylalanine). At serine 5 the chain carries Phosphoserine; by TRPM7. Glutamine 19 participates in a covalent cross-link: Isoglutamyl lysine isopeptide (Gln-Lys) (interchain with K-?). Tyrosine 21 carries the phosphotyrosine modification. A Phosphoserine; by PKC modification is found at serine 27. Phosphoserine occurs at positions 34 and 37. 4 Annexin repeats span residues 42–113, 114–185, 197–269, and 273–344; these read FNVS…AMLK, TPAQ…ALAK, DLAD…TIVK, and STPA…ALCG. Lysine 58 carries the N6-acetyllysine modification. Positions 59, 60, 62, 97, 100, 105, 127, 129, 131, 132, and 134 each coordinate Ca(2+). Residue threonine 136 is modified to Phosphothreonine. Aspartate 171, glycine 210, and arginine 213 together coordinate Ca(2+). Lysine 214 is covalently cross-linked (Glycyl lysine isopeptide (Lys-Gly) (interchain with G-Cter in SUMO1); alternate). Residue lysine 214 forms a Glycyl lysine isopeptide (Lys-Gly) (interchain with G-Cter in SUMO2); alternate linkage. Glycine 215, aspartate 253, glutamate 255, and leucine 256 together coordinate Ca(2+). A Glycyl lysine isopeptide (Lys-Gly) (interchain with G-Cter in SUMO1) cross-link involves residue lysine 257. Residues glutamate 261, methionine 286, glycine 288, and glycine 290 each contribute to the Ca(2+) site. Lysine 312 carries the N6-acetyllysine modification. A disulfide bridge connects residues cysteine 324 and cysteine 343. Ca(2+) is bound by residues leucine 328, glutamate 330, and threonine 331. Lysine 332 is covalently cross-linked (Glycyl lysine isopeptide (Lys-Gly) (interchain with G-Cter in SUMO1)). Position 336 (glutamate 336) interacts with Ca(2+).

This sequence belongs to the annexin family. Homodimer; non-covalently linked. Homodimer; linked by transglutamylation. Homodimers linked by transglutamylation are observed in placenta, but not in other tissues. Interacts with S100A11. Heterotetramer, formed by two molecules each of S100A11 and ANXA1. Interacts with DYSF. Interacts with EGFR. Post-translationally, phosphorylated by protein kinase C, EGFR and TRPM7. Phosphorylated in response to EGF treatment. In terms of processing, sumoylated. Proteolytically cleaved by cathepsin CTSG to release the active N-terminal peptide Ac2-26. As to expression, detected in lung. Detected at the apical membrane of airway epithelial cells. Detected in intestinal epithelial cells. Detected in skeletal muscle. Detected in prostate. Detected in thymus (at protein level). Detected in stomach, lung, spleen, ovary and uterus, and at lower levels in kidney, thymus and heart.

The protein localises to the nucleus. Its subcellular location is the cytoplasm. It localises to the cell projection. The protein resides in the cilium. It is found in the basolateral cell membrane. The protein localises to the lateral cell membrane. Its subcellular location is the cell membrane. It localises to the apical cell membrane. The protein resides in the membrane. It is found in the early endosome. The protein localises to the cytoplasmic vesicle membrane. Its subcellular location is the endosome membrane. It localises to the secreted. The protein resides in the extracellular space. It is found in the extracellular exosome. The protein localises to the cytoplasmic vesicle. Its subcellular location is the secretory vesicle lumen. It localises to the phagocytic cup. In terms of biological role, plays important roles in the innate immune response as effector of glucocorticoid-mediated responses and regulator of the inflammatory process. Has anti-inflammatory activity. Plays a role in glucocorticoid-mediated down-regulation of the early phase of the inflammatory response. Contributes to the adaptive immune response by enhancing signaling cascades that are triggered by T-cell activation, regulates differentiation and proliferation of activated T-cells. Promotes the differentiation of T-cells into Th1 cells and negatively regulates differentiation into Th2 cells. Has no effect on unstimulated T-cells. Negatively regulates hormone exocytosis via activation of the formyl peptide receptors and reorganization of the actin cytoskeleton. Has high affinity for Ca(2+) and can bind up to eight Ca(2+) ions. Displays Ca(2+)-dependent binding to phospholipid membranes. Plays a role in the formation of phagocytic cups and phagosomes. Plays a role in phagocytosis by mediating the Ca(2+)-dependent interaction between phagosomes and the actin cytoskeleton. Functions at least in part by activating the formyl peptide receptors and downstream signaling cascades. Promotes chemotaxis of granulocytes and monocytes via activation of the formyl peptide receptors. Promotes rearrangement of the actin cytoskeleton, cell polarization and cell migration. Promotes resolution of inflammation and wound healing. Acts via neutrophil N-formyl peptide receptors to enhance the release of CXCL2. This chain is Annexin A1 (Anxa1), found in Mus musculus (Mouse).